A 227-amino-acid chain; its full sequence is 2,3-bisphosphoglycerate-dependent phosphoglycerate mutase (227 aa).

Residues 7–14 (RHGLSEWN), 20–21 (TG), Arg-59, 86–89 (ERHY), Lys-97, 113–114 (RR), and 182–183 (GN) contribute to the substrate site. His-8 serves as the catalytic Tele-phosphohistidine intermediate. The Proton donor/acceptor role is filled by Glu-86.

The protein belongs to the phosphoglycerate mutase family. BPG-dependent PGAM subfamily. In terms of assembly, homodimer.

It catalyses the reaction (2R)-2-phosphoglycerate = (2R)-3-phosphoglycerate. Its pathway is carbohydrate degradation; glycolysis; pyruvate from D-glyceraldehyde 3-phosphate: step 3/5. Functionally, catalyzes the interconversion of 2-phosphoglycerate and 3-phosphoglycerate. This is 2,3-bisphosphoglycerate-dependent phosphoglycerate mutase from Actinobacillus succinogenes (strain ATCC 55618 / DSM 22257 / CCUG 43843 / 130Z).